A 374-amino-acid polypeptide reads, in one-letter code: Putative F-box protein At3g16590 (374 aa).

Residues M1–H45 enclose the F-box domain.

The polypeptide is Putative F-box protein At3g16590 (Arabidopsis thaliana (Mouse-ear cress)).